A 311-amino-acid chain; its full sequence is Protoheme IX farnesyltransferase (311 aa).

A run of 9 helical transmembrane segments spans residues 32–52 (VMSL…VSIN), 53–73 (PWYG…AGVL), 104–124 (FVFG…FINW), 125–145 (FAAL…TIWL), 153–173 (IVIG…AATG), 180–200 (FLLF…LSLF), 224–244 (KQIL…FIID), 245–265 (FAGI…IYFA), and 290–310 (FYLA…YFII).

This sequence belongs to the UbiA prenyltransferase family. Protoheme IX farnesyltransferase subfamily.

It localises to the cell inner membrane. The enzyme catalyses heme b + (2E,6E)-farnesyl diphosphate + H2O = Fe(II)-heme o + diphosphate. The protein operates within porphyrin-containing compound metabolism; heme O biosynthesis; heme O from protoheme: step 1/1. Functionally, converts heme B (protoheme IX) to heme O by substitution of the vinyl group on carbon 2 of heme B porphyrin ring with a hydroxyethyl farnesyl side group. The chain is Protoheme IX farnesyltransferase from Bartonella quintana (strain Toulouse) (Rochalimaea quintana).